Consider the following 324-residue polypeptide: Phospho-N-acetylmuramoyl-pentapeptide-transferase (324 aa).

10 helical membrane-spanning segments follow: residues 5 to 25, 50 to 70, 77 to 97, 117 to 137, 147 to 167, 176 to 196, 203 to 223, 227 to 247, 250 to 270, and 304 to 324; these read VMVLAIILSFLITVILSPLFI, GTPTMGGIMILLSIVVTTLLM, LSVETYLLLFVTIGYGLLGFL, LIGQLMIAIVFYFVYQRSGFS, LSINLGFGYVLLLIFMLVGGS, LDGLLAGTAAIAFGAYAVLAW, IAIFCVSVVGAVLGFLVFNAH, VFMGDTGSLALGGAIATVAIL, LEILLVIIGGVFVIETLSVII, and VTFWAVGLLFAMLGIYIEVWI.

This sequence belongs to the glycosyltransferase 4 family. MraY subfamily. Requires Mg(2+) as cofactor.

It localises to the cell membrane. It catalyses the reaction UDP-N-acetyl-alpha-D-muramoyl-L-alanyl-gamma-D-glutamyl-meso-2,6-diaminopimeloyl-D-alanyl-D-alanine + di-trans,octa-cis-undecaprenyl phosphate = di-trans,octa-cis-undecaprenyl diphospho-N-acetyl-alpha-D-muramoyl-L-alanyl-D-glutamyl-meso-2,6-diaminopimeloyl-D-alanyl-D-alanine + UMP. The protein operates within cell wall biogenesis; peptidoglycan biosynthesis. Catalyzes the initial step of the lipid cycle reactions in the biosynthesis of the cell wall peptidoglycan: transfers peptidoglycan precursor phospho-MurNAc-pentapeptide from UDP-MurNAc-pentapeptide onto the lipid carrier undecaprenyl phosphate, yielding undecaprenyl-pyrophosphoryl-MurNAc-pentapeptide, known as lipid I. This is Phospho-N-acetylmuramoyl-pentapeptide-transferase from Geobacillus sp. (strain WCH70).